A 314-amino-acid polypeptide reads, in one-letter code: tRNA dimethylallyltransferase (314 aa).

10-17 (GPTAVGKT) contacts ATP. 12 to 17 (TAVGKT) is a substrate binding site. Residues 35 to 38 (DSMQ) are interaction with substrate tRNA.

It belongs to the IPP transferase family. Monomer. Mg(2+) serves as cofactor.

It catalyses the reaction adenosine(37) in tRNA + dimethylallyl diphosphate = N(6)-dimethylallyladenosine(37) in tRNA + diphosphate. Catalyzes the transfer of a dimethylallyl group onto the adenine at position 37 in tRNAs that read codons beginning with uridine, leading to the formation of N6-(dimethylallyl)adenosine (i(6)A). The protein is tRNA dimethylallyltransferase of Clostridium novyi (strain NT).